The following is a 510-amino-acid chain: 2-isopropylmalate synthase (510 aa).

A Pyruvate carboxyltransferase domain is found at 4 to 266; the sequence is IQVFDTTLRD…ETNLKLDETK (263 aa). Mn(2+) contacts are provided by aspartate 13, histidine 201, histidine 203, and asparagine 237. The tract at residues 390–510 is regulatory domain; it reads QVETLQLQFV…DTARKDGVVS (121 aa).

Belongs to the alpha-IPM synthase/homocitrate synthase family. LeuA type 1 subfamily. Homodimer. It depends on Mn(2+) as a cofactor.

It is found in the cytoplasm. The enzyme catalyses 3-methyl-2-oxobutanoate + acetyl-CoA + H2O = (2S)-2-isopropylmalate + CoA + H(+). Its pathway is amino-acid biosynthesis; L-leucine biosynthesis; L-leucine from 3-methyl-2-oxobutanoate: step 1/4. Functionally, catalyzes the condensation of the acetyl group of acetyl-CoA with 3-methyl-2-oxobutanoate (2-ketoisovalerate) to form 3-carboxy-3-hydroxy-4-methylpentanoate (2-isopropylmalate). The sequence is that of 2-isopropylmalate synthase from Staphylococcus carnosus (strain TM300).